The chain runs to 180 residues: Large ribosomal subunit protein uL6 (180 aa).

It belongs to the universal ribosomal protein uL6 family. In terms of assembly, part of the 50S ribosomal subunit.

Its function is as follows. This protein binds to the 23S rRNA, and is important in its secondary structure. It is located near the subunit interface in the base of the L7/L12 stalk, and near the tRNA binding site of the peptidyltransferase center. In Borrelia turicatae (strain 91E135), this protein is Large ribosomal subunit protein uL6.